We begin with the raw amino-acid sequence, 528 residues long: Arginine--tRNA ligase (528 aa).

The 'HIGH' region motif lies at 112–122 (ANPTGPLHIGH).

Belongs to the class-I aminoacyl-tRNA synthetase family. Monomer.

The protein resides in the cytoplasm. The enzyme catalyses tRNA(Arg) + L-arginine + ATP = L-arginyl-tRNA(Arg) + AMP + diphosphate. The polypeptide is Arginine--tRNA ligase (Wolinella succinogenes (strain ATCC 29543 / DSM 1740 / CCUG 13145 / JCM 31913 / LMG 7466 / NCTC 11488 / FDC 602W) (Vibrio succinogenes)).